The sequence spans 285 residues: MATKLQDGNTPCLAATPSEPRPTVLVFDSGVGGLSVYDEIRHLLPDLHYIYAFDNVAFPYGEKSEAFIVERVVAIVTAVQKRYPLALAVVACNTASTVSLPALREKFDFPVVGVVPAIKPAARLTANGIVGLLATRGTVKRSYTHELIARFANECQIEMLGSAEMVELAEAKLHGEDVSLDALKRILRPWLRMKEPPDTVVLGCTHFPLLQEELLQVLPEGTRLVDSGAAIARRTAWLLEHEAPDAKSADANIAFCMAMTPEAEQLLPVLQRYGFETLEKLAVLG.

Residues 28–29 (DS) and 60–61 (YG) contribute to the substrate site. Residue cysteine 92 is the Proton donor/acceptor of the active site. Residue 93-94 (NT) participates in substrate binding. The Proton donor/acceptor role is filled by cysteine 204. 205-206 (TH) lines the substrate pocket.

The protein belongs to the aspartate/glutamate racemases family.

The catalysed reaction is L-glutamate = D-glutamate. It functions in the pathway cell wall biogenesis; peptidoglycan biosynthesis. In terms of biological role, provides the (R)-glutamate required for cell wall biosynthesis. This Escherichia coli O7:K1 (strain IAI39 / ExPEC) protein is Glutamate racemase.